Reading from the N-terminus, the 495-residue chain is Protein adenylyltransferase Fic (495 aa).

The interval 1-23 (MGTEAEPPSPPSPPAQQQEQANP) is disordered. The helical transmembrane segment at 36–58 (LYRLVLFFIAGSLTAWMFHAFSS) threads the bilayer. TPR repeat units lie at residues 121–154 (ALVSLRMAQDMYLTGKDDKAARLFEHALALAPRH) and 155–189 (PEVLLRYGEFLEHNQRNIVLADQYYFQALTISPSN). The short motif at 246 to 251 (SVGIEG) is the Inhibitory (S/T)XXXE(G/N) motif element. ATP-binding positions include glutamate 250 and 331–334 (VGGH). The Fido domain maps to 300-435 (ITIKDILELH…IRPFVRFIAD (136 aa)). Histidine 378 is a catalytic residue. Residues 382–389 (DGNGRTSR), 414–415 (YY), and asparagine 422 contribute to the ATP site.

The protein belongs to the fic family. Homodimer.

The protein resides in the membrane. It catalyses the reaction L-tyrosyl-[protein] + ATP = O-(5'-adenylyl)-L-tyrosyl-[protein] + diphosphate. The catalysed reaction is L-threonyl-[protein] + ATP = 3-O-(5'-adenylyl)-L-threonyl-[protein] + diphosphate. The enzyme catalyses 3-O-(5'-adenylyl)-L-threonyl-[protein] + H2O = L-threonyl-[protein] + AMP + H(+). Its activity is regulated as follows. The side chain of Glu-250 determines which of the two opposing activities (AMPylase or de-AMPylase) will take place. In response to endoplasmic reticulum stress, mediates de-AMPylase activity. Adenylyltransferase activity is inhibited by the inhibitory helix present at the N-terminus: Glu-250 binds ATP and competes with ATP-binding at Arg-389, thereby preventing adenylyltransferase activity. In unstressed cells, disengagement of Glu-250 promotes adenylyltransferase activity. Activation dissociates ATP-binding from Glu-250, allowing ordered binding of the entire ATP moiety with the alpha-phosphate in an orientation that is productive for accepting an incoming target hydroxyl side chain. In terms of biological role, protein that can both mediate the addition of adenosine 5'-monophosphate (AMP) to specific residues of target proteins (AMPylation), and the removal of the same modification from target proteins (de-AMPylation), depending on the context. The side chain of Glu-250 determines which of the two opposing activities (AMPylase or de-AMPylase) will take place. Acts as a key regulator of the unfolded protein response (UPR) by mediating AMPylation or de-AMPylation of Hsc70-3/BiP. In unstressed cells, acts as an adenylyltransferase by mediating AMPylation of Hsc70-3/BiP at 'Thr-518', thereby inactivating it. In response to endoplasmic reticulum stress, acts as a phosphodiesterase by mediating removal of ATP (de-AMPylation) from Hsc70-3/BiP at 'Thr-518', leading to restore HSPA5/BiP activity. This chain is Protein adenylyltransferase Fic, found in Drosophila erecta (Fruit fly).